The primary structure comprises 433 residues: Gamma-glutamyl phosphate reductase (433 aa).

This sequence belongs to the gamma-glutamyl phosphate reductase family.

Its subcellular location is the cytoplasm. The enzyme catalyses L-glutamate 5-semialdehyde + phosphate + NADP(+) = L-glutamyl 5-phosphate + NADPH + H(+). The protein operates within amino-acid biosynthesis; L-proline biosynthesis; L-glutamate 5-semialdehyde from L-glutamate: step 2/2. In terms of biological role, catalyzes the NADPH-dependent reduction of L-glutamate 5-phosphate into L-glutamate 5-semialdehyde and phosphate. The product spontaneously undergoes cyclization to form 1-pyrroline-5-carboxylate. The chain is Gamma-glutamyl phosphate reductase from Psychrobacter cryohalolentis (strain ATCC BAA-1226 / DSM 17306 / VKM B-2378 / K5).